Reading from the N-terminus, the 432-residue chain is Amino-acid acetyltransferase (432 aa).

The N-acetyltransferase domain maps to 286 to 425; it reads ELVREAAIED…ASLYNYQRNS (140 aa).

Belongs to the acetyltransferase family. ArgA subfamily.

It localises to the cytoplasm. It catalyses the reaction L-glutamate + acetyl-CoA = N-acetyl-L-glutamate + CoA + H(+). Its pathway is amino-acid biosynthesis; L-arginine biosynthesis; N(2)-acetyl-L-ornithine from L-glutamate: step 1/4. This chain is Amino-acid acetyltransferase, found in Pseudomonas fluorescens (strain Pf0-1).